A 235-amino-acid polypeptide reads, in one-letter code: Large ribosomal subunit protein uL1 (235 aa).

It belongs to the universal ribosomal protein uL1 family. As to quaternary structure, part of the 50S ribosomal subunit.

Functionally, binds directly to 23S rRNA. The L1 stalk is quite mobile in the ribosome, and is involved in E site tRNA release. In terms of biological role, protein L1 is also a translational repressor protein, it controls the translation of the L11 operon by binding to its mRNA. In Mycolicibacterium paratuberculosis (strain ATCC BAA-968 / K-10) (Mycobacterium paratuberculosis), this protein is Large ribosomal subunit protein uL1.